Here is a 1025-residue protein sequence, read N- to C-terminus: Collagen alpha-1(VI) chain (1025 aa).

Residues M1 to T19 form the signal peptide. The N-terminal globular domain stretch occupies residues Q20–R255. The VWFA 1 domain occupies D36–I234. N-linked (GlcNAc...) asparagine glycosylation is present at N211. Residues Q252–P588 are disordered. Residues G256–D591 are triple-helical region. Positions R261–D263 match the Cell attachment site motif. Basic and acidic residues-rich tracts occupy residues E267–D284 and K300–K333. Short sequence motifs (cell attachment site) lie at residues R441 to D443 and R477 to D479. 2 N-linked (GlcNAc...) asparagine glycosylation sites follow: N515 and N536. The span at G549–N559 shows a compositional bias: acidic residues. Residues P578 to P588 are compositionally biased toward pro residues. Positions E592–G1025 are C-terminal globular domain. 2 consecutive VWFA domains span residues D614–I802 and D826–V1018. Residues N801 and N893 are each glycosylated (N-linked (GlcNAc...) asparagine).

This sequence belongs to the type VI collagen family. In terms of assembly, trimers composed of three different chains: alpha-1(VI), alpha-2(VI), and alpha-3(VI) or alpha-4(VI) or alpha-5(VI) or alpha-6(VI). Post-translationally, prolines at the third position of the tripeptide repeating unit (G-X-Y) are hydroxylated in some or all of the chains.

The protein localises to the secreted. Its subcellular location is the extracellular space. It is found in the extracellular matrix. Collagen VI acts as a cell-binding protein. The sequence is that of Collagen alpha-1(VI) chain (Col6a1) from Mus musculus (Mouse).